We begin with the raw amino-acid sequence, 205 residues long: Protein MIS12 homolog (205 aa).

The stretch at 108–205 (PYSEEDFQHL…EKESKRLKIS (98 aa)) forms a coiled coil.

Belongs to the mis12 family. Component of the MIS12 complex composed of MIS12, DSN1, NSL1 and PMF1. Also interacts with KNL1, CBX3, CBX5, NDC80 and ZWINT.

Its subcellular location is the chromosome. It localises to the centromere. The protein localises to the kinetochore. Functionally, part of the MIS12 complex which is required for normal chromosome alignment and segregation and for kinetochore formation during mitosis. Essential for proper kinetochore microtubule attachments. In Homo sapiens (Human), this protein is Protein MIS12 homolog.